Consider the following 116-residue polypeptide: Ig heavy chain V-A1 region BS-5 (116 aa).

Pyrrolidone carboxylic acid is present on glutamine 1. An Ig-like domain is found at 1–107 (QSVEESGGRL…LVHLAFVDVW (107 aa)).

This is Ig heavy chain V-A1 region BS-5 from Oryctolagus cuniculus (Rabbit).